Consider the following 149-residue polypeptide: MQLTSYTDYSLRLLLYLALQPKHKLSSVKQVADIYRISYNHLTKVTHELGKLGLIETIKGRNGGIRLAKEPEEINIGEVVKQTEDNLELVECFNRETNTCILNPACRLKGVLHEALAAYLQVLEQYTVKDLVLNEDDLRALLQFKTTEQ.

An HTH rrf2-type domain is found at 2–133 (QLTSYTDYSL…EQYTVKDLVL (132 aa)). Positions 28–51 (VKQVADIYRISYNHLTKVTHELGK) form a DNA-binding region, H-T-H motif. Cys92, Cys100, and Cys106 together coordinate [2Fe-2S] cluster.

Requires [2Fe-2S] cluster as cofactor.

Its function is as follows. Nitric oxide-responsive transcriptional regulator. This chain is HTH-type transcriptional regulator NsrR (nsrR), found in Shouchella clausii (strain KSM-K16) (Alkalihalobacillus clausii).